Consider the following 527-residue polypeptide: UDP-glucuronosyltransferase 2A3 (527 aa).

The signal sequence occupies residues 1 to 23 (MRSEKSALVFLLLQLFCVGCGFC). The Extracellular portion of the chain corresponds to 24–486 (GKVLVWPCDM…AAHNLTWFQH (463 aa)). N-linked (GlcNAc...) asparagine glycosylation is present at Asn-313. Residues 487–507 (YSIDVIGFLLACVATAIFLFT) traverse the membrane as a helical segment. Over 508–523 (KCCLFSCQKFNKTRKI) the chain is Cytoplasmic.

The protein belongs to the UDP-glycosyltransferase family.

Its subcellular location is the membrane. It carries out the reaction glucuronate acceptor + UDP-alpha-D-glucuronate = acceptor beta-D-glucuronoside + UDP + H(+). Its function is as follows. UDP-glucuronosyltransferases catalyze phase II biotransformation reactions in which lipophilic substrates are conjugated with glucuronic acid to increase water solubility and enhance excretion. They are of major importance in the conjugation and subsequent elimination of potentially toxic xenobiotics and endogenous compounds. This is UDP-glucuronosyltransferase 2A3 (UGT2A3) from Pongo abelii (Sumatran orangutan).